A 465-amino-acid chain; its full sequence is Cysteine--tRNA ligase (465 aa).

Cys30 lines the Zn(2+) pocket. The short motif at Ile32–His42 is the 'HIGH' region element. Cys214, His239, and Glu243 together coordinate Zn(2+). The short motif at Lys271–Ser275 is the 'KMSKS' region element. Lys274 contributes to the ATP binding site.

The protein belongs to the class-I aminoacyl-tRNA synthetase family. As to quaternary structure, monomer. It depends on Zn(2+) as a cofactor.

Its subcellular location is the cytoplasm. The enzyme catalyses tRNA(Cys) + L-cysteine + ATP = L-cysteinyl-tRNA(Cys) + AMP + diphosphate. The chain is Cysteine--tRNA ligase from Burkholderia thailandensis (strain ATCC 700388 / DSM 13276 / CCUG 48851 / CIP 106301 / E264).